Consider the following 393-residue polypeptide: Elongation factor Tu (393 aa).

The region spanning 10-203 (KPHVNIGTIG…AVDSYIPEPV (194 aa)) is the tr-type G domain. The tract at residues 19–26 (GHVDHGKT) is G1. 19–26 (GHVDHGKT) provides a ligand contact to GTP. A Mg(2+)-binding site is contributed by threonine 26. The tract at residues 60–64 (GITIS) is G2. The interval 81-84 (DCPG) is G3. GTP is bound by residues 81-85 (DCPGH) and 136-139 (NKVD). Residues 136–139 (NKVD) are G4. The interval 173–175 (SAL) is G5.

The protein belongs to the TRAFAC class translation factor GTPase superfamily. Classic translation factor GTPase family. EF-Tu/EF-1A subfamily. As to quaternary structure, monomer.

It localises to the cytoplasm. The enzyme catalyses GTP + H2O = GDP + phosphate + H(+). Its function is as follows. GTP hydrolase that promotes the GTP-dependent binding of aminoacyl-tRNA to the A-site of ribosomes during protein biosynthesis. The polypeptide is Elongation factor Tu (Prosthecochloris aestuarii (strain DSM 271 / SK 413)).